The chain runs to 158 residues: Retinoic acid receptor beta (158 aa).

The segment covering 1-18 has biased composition (low complexity); the sequence is RHSAQSIETQSTSSEELV. A disordered region spans residues 1–24; that stretch reads RHSAQSIETQSTSSEELVPSPPSP. Residues 31–106 constitute a DNA-binding region (nuclear receptor); sequence YKPCFVCQDK…VGMSKESVRN (76 aa). 2 NR C4-type zinc fingers span residues 34-54 and 70-94; these read CFVC…CEGC and CHRD…LQRC. In terms of domain architecture, NR LBD spans 129–158; sequence ELDDLTEKIRKAHQETFPSLCQLGKYTTNS.

Belongs to the nuclear hormone receptor family. NR1 subfamily. In terms of assembly, heterodimer; with a RXR molecule. Binds DNA preferentially as a RAR/RXR heterodimer.

It is found in the nucleus. In terms of biological role, receptor for retinoic acid. Retinoic acid receptors bind as heterodimers to their target response elements in response to their ligands, all-trans or 9-cis retinoic acid, and regulate gene expression in various biological processes. The RAR/RXR heterodimers bind to the retinoic acid response elements (RARE) composed of tandem 5'-AGGTCA-3' sites known as DR1-DR5. This chain is Retinoic acid receptor beta (RARB), found in Notophthalmus viridescens (Eastern newt).